The chain runs to 420 residues: Xyloglucan O-acetyltransferase 4 (420 aa).

Residues M1–R30 lie on the Cytoplasmic side of the membrane. The helical; Signal-anchor for type II membrane protein transmembrane segment at P31–L51 threads the bilayer. Residues N52–D420 lie on the Lumenal side of the membrane. 4 disulfide bridges follow: C78-C128, C99-C164, C108-C400, and C323-C396. N-linked (GlcNAc...) asparagine glycosylation is present at N96. The short motif at G151–S153 is the GDS motif element. Catalysis depends on S153, which acts as the Nucleophile. 4 N-linked (GlcNAc...) asparagine glycosylation sites follow: N192, N212, N270, and N324. The Proton donor role is filled by D395. The short motif at D395–H398 is the DXXH motif element. Residue H398 is the Proton acceptor of the active site.

This sequence belongs to the PC-esterase family. TBL subfamily.

Its subcellular location is the golgi apparatus membrane. In terms of biological role, xyloglucan acetyltransferase that catalyzes the acetylation of fucosylated Gal residues on xyloglucan side chains. Predominantly catalyze 6-O-monoacetylation of Gal residues in the Fuc-Gal-Xyl trisaccharide side chains of xyloglucan oligomers. This Populus trichocarpa (Western balsam poplar) protein is Xyloglucan O-acetyltransferase 4.